Reading from the N-terminus, the 835-residue chain is MKVLALRHSVAQVYADTQVYTHDDSKDEYENAFLISNLTTHNILYLNYSVKTLQILNKSGIAAIEIQKMDELFTLIRCNFTYDYIDDVVYLHDYSYYTNNEIRTDQHWITKTNIEDYLLPGWKLTYVGYNGSDTRGHYNFSFRCQNAATDDDAIIEYIYSDELDFQSFILKKIKERMTTSLPIARLSNRVFRDKLFKTLSVNHDKVVNIGPRNESMFTFLDHPSIKQFSNGPYLVKDTIKLKQERWLGKRLSQFDIGQYKNMLNVLTTLYQYYDIYHEKPIVYMIGSAPSYWIYDVKQYSDLKFETWDPLDTPYSNLHHKELFYINDVQRLKDNSILYIDIRTDRGTMDWKEWRKMVERQTTDNLHIAYKYLSTGKAKICCVKMTAMDLELPISAKLLHHPTTEIRSEFYLMMDIWDSKNIKRFIPKGVLYSYINNTITENVFIQQPFKLKTLKNEYIIALYALSNDLNNREDVVKLINNQKKALITVRINNTFKDEPKVGFKNIYDWTFLPTDFETNGSIITSYDGCLGIFGLSISLASKPTGNNHLFILSGTDKYFKLDQFANHMSISRRSHQIRFSESATSYSGYIFRDLSNNNFNLIGTNVENSVSGHVYNALIYYRYNYSFDLKRWIYLHSTGKASIEGGKYYEHAPIELIYACRSAREFAKLQDDVTVLRYSNEIENYINKVYSITYADDPNYFIGVKFKNIPYKYNVKVPHLTFGVLNISEQMLPDVIVILKKFKNELFGMEITTSYTYMLSDEVYVANISGVLSTYFKIYNAFYKEQITFGQSRMFIPHVTLSFSNEKTVRIDNTKLYIDSIYLRKIKGDTVFDMTG.

The segment at 171–245 is N7-methyltransferase activity; that stretch reads KKIKERMTTS…KDTIKLKQER (75 aa). Residues 246-428 are 2'-O-methyltransferase activity; sequence WLGKRLSQFD…KNIKRFIPKG (183 aa). The interval 429 to 555 is N7-methyltransferase activity; that stretch reads VLYSYINNTI…NHLFILSGTD (127 aa). The tract at residues 556-692 is GTase/RTPase activity; that stretch reads KYFKLDQFAN…NYINKVYSIT (137 aa). Positions 693–835 are 2'-5'-phosphodiesterase activity; sequence YADDPNYFIG…KGDTVFDMTG (143 aa). Residues H718, T720, H797, and T799 each act as for 2'-5'-phosphodiesterase activity in the active site.

This sequence belongs to the rotavirus VP3 family. In terms of assembly, interacts with VP1. Interacts with VP2.

It is found in the virion. The catalysed reaction is a 5'-end diphospho-ribonucleoside in mRNA + GTP + H(+) = a 5'-end (5'-triphosphoguanosine)-ribonucleoside in mRNA + diphosphate. It catalyses the reaction a 5'-end (5'-triphosphoguanosine)-ribonucleoside in mRNA + S-adenosyl-L-methionine = a 5'-end (N(7)-methyl 5'-triphosphoguanosine)-ribonucleoside in mRNA + S-adenosyl-L-homocysteine. The enzyme catalyses 5'-triphosphoadenylyl-(2'-&gt;5')-adenylyl-(2'-&gt;5')-adenosine + 2 H2O = 2 AMP + ATP + 2 H(+). In terms of biological role, multifunctional enzyme involved in mRNA capping. Catalyzes the formation of the 5' cap structure on the viral plus-strand transcripts. Specifically binds to GTP and displays guanylyltransferase and methyltransferase activities. Has affinity for ssRNA but not for dsRNA. Capping activity is non-specific and caps RNAs that initiate with either a G or an A residue. Together with VP1 polymerase, forms a VP1-VP3 complex positioned near the channels situated at each of the five-fold vertices of the core. Following infection, the outermost layer of the virus is lost, leaving a double-layered particle (DLP) made up of the core and VP6 shell. VP1 then catalyzes the transcription of fully conservative plus-strand genomic RNAs that are capped by VP3 and extruded through the DLP's channels into the cytoplasm where they function as mRNAs for translation of viral proteins. DLPs probably have an RNA triphosphatase activity as well, whereas open cores do not. Functionally, counteracts the host innate immune response thanks to its phosphodiesterase that degrades the 5'-triphosphorylated, 2'-5' linked adenylate oligomers produced by the host cell IFN-inducible 2',5'-oligoadenylate synthetase (OAS). The host RNaseL is therefore not activated. The polypeptide is Protein VP3 (Rotavirus A (strain RVA/Human/Japan/S2/1980/G2P1B[4]) (RV-A)).